A 210-amino-acid polypeptide reads, in one-letter code: Small ribosomal subunit protein uS3 (210 aa).

A KH type-2 domain is found at 17 to 86 (IDEFLEKELR…NPQIDVQEIK (70 aa)).

This sequence belongs to the universal ribosomal protein uS3 family. As to quaternary structure, part of the 30S ribosomal subunit.

Binds the lower part of the 30S subunit head. This Pyrococcus horikoshii (strain ATCC 700860 / DSM 12428 / JCM 9974 / NBRC 100139 / OT-3) protein is Small ribosomal subunit protein uS3.